A 465-amino-acid chain; its full sequence is Argininosuccinate lyase (465 aa).

The protein belongs to the lyase 1 family. Argininosuccinate lyase subfamily.

The protein localises to the cytoplasm. The enzyme catalyses 2-(N(omega)-L-arginino)succinate = fumarate + L-arginine. The protein operates within amino-acid biosynthesis; L-arginine biosynthesis; L-arginine from L-ornithine and carbamoyl phosphate: step 3/3. This chain is Argininosuccinate lyase, found in Rhodopseudomonas palustris (strain HaA2).